A 181-amino-acid polypeptide reads, in one-letter code: MMFNRITRSAGLLARARPTTTAVMSPMTPLAISRRGYHEKVLDHYNNPRNVGSMNKNDEDVGTGLVGAPACGDVMKLQIRVDDNGVIQDVKFKTFGCGSAIASSSYVTELVRGKSLAEAGKIKNTVIAKELSLPPVKLHCSMLAEDAIKSAISDYNSKRKTKNPTLGAEAAETPAAATATA.

Positions 159–181 are disordered; that stretch reads RKTKNPTLGAEAAETPAAATATA. The span at 168-181 shows a compositional bias: low complexity; sequence AEAAETPAAATATA.

It belongs to the NifU family. As to quaternary structure, component of the core Fe-S cluster (ISC) assembly machinery. The cofactor is [2Fe-2S] cluster.

Its subcellular location is the mitochondrion matrix. It functions in the pathway cofactor biosynthesis; iron-sulfur cluster biosynthesis. Its function is as follows. Scaffold protein for the de novo synthesis of iron-sulfur (Fe-S) clusters within mitochondria, which is required for maturation of both mitochondrial and cytoplasmic [2Fe-2S] and [4Fe-4S] proteins. First, a [2Fe-2S] cluster is transiently assembled on the scaffold protein ISU1. In a second step, the cluster is released from ISU1, transferred to a glutaredoxin, followed by the formation of mitochondrial [2Fe-2S] proteins, the synthesis of [4Fe-4S] clusters and their target-specific insertion into the recipient apoproteins. Cluster assembly on ISU1 depends on the function of the cysteine desulfurase complex NFS1-ISD11, which serves as the sulfur donor for cluster synthesis, the iron-binding protein frataxin as the putative iron donor, and the electron transfer chain comprised of ferredoxin reductase and ferredoxin, which receive their electrons from NADH. The chain is Iron sulfur cluster assembly protein 1, mitochondrial (ISU1) from Yarrowia lipolytica (strain CLIB 122 / E 150) (Yeast).